Here is a 308-residue protein sequence, read N- to C-terminus: MTFQDIILTLQNFWAKQNCLIVQPYDVEKGAGTLNPMTFLRSIGPEPWNVAYVEPSRRPADGRYGENPNRLYQHHQFQVIMKPSPDNIQELYLESLRELGIEPLEHDIRFVEDNWEHPGLGAWGLGWEVWLDGMEITQFTYFQQVGGLECKPVAVELTYGLERLASYIQEKENVFDLEWCNGYTYGDVFLQPEYEHSKYTFELSDVDMLFSLYNTYEAEAKRLMAERLVYPAYDYVLKCSHTFNLLDARGAISVTERTGYIARVRNLSREVAQTYYKERERLGFPLLQKGNADAADQVNQVKGEDTNE.

It belongs to the class-II aminoacyl-tRNA synthetase family. Tetramer of two alpha and two beta subunits.

The protein localises to the cytoplasm. It catalyses the reaction tRNA(Gly) + glycine + ATP = glycyl-tRNA(Gly) + AMP + diphosphate. This Brevibacillus brevis (strain 47 / JCM 6285 / NBRC 100599) protein is Glycine--tRNA ligase alpha subunit.